Consider the following 235-residue polypeptide: Transmembrane emp24 domain-containing protein 9 (235 aa).

An N-terminal signal peptide occupies residues 1-37; that stretch reads MAAERSLWVVGLCPGSRLGRVVRVLLLLLWFAARGGA. Residues 38–201 lie on the Lumenal side of the membrane; that stretch reads LYFHIGETEK…FRQTSESTNQ (164 aa). A GOLD domain is found at 47 to 145; it reads KKCFIEEIPD…MLRVHLDIQV (99 aa). The tract at residues 121-160 is required for interaction with STX17; sequence CLHSNSTKFSLFAGGMLRVHLDIQVGEHANDYAEIAAKDK. The N-linked (GlcNAc...) asparagine glycan is linked to Asn-125. Positions 154-184 form a coiled coil; sequence EIAAKDKLSELQLRVRQLVEQVEQIQKEQNY. An N6-acetyllysine modification is found at Lys-160. The chain crosses the membrane as a helical span at residues 202–222; that stretch reads RVLWWSILQTLILVAIGVWQM. The Cytoplasmic portion of the chain corresponds to 223–235; it reads RHLKSFFEAKKLV. Residues 228 to 229 carry the COPII vesicle coat-binding motif; it reads FF. The COPI vesicle coat-binding signature appears at 228–235; it reads FFEAKKLV.

It belongs to the EMP24/GP25L family. Monomer and homodimer in endoplasmic reticulum. Predominantly monomeric and to lesser extent homodimeric in endoplasmic reticulum-Golgi intermediate compartment and cis-Golgi network. Probably oligomerizes with other members of the EMP24/GP25L family such as TMED2, TMED7 and TMED10. Interacts with TMED5. Interacts (via C-terminus) with COPG1; the interaction involves dimeric TMED9. Interacts with PTPN2 and SPAST. Interacts with STX17; the interaction is direct. Post-translationally, N-linked glycosylated containing high mannose.

Its subcellular location is the endoplasmic reticulum membrane. It localises to the golgi apparatus. The protein resides in the cis-Golgi network membrane. It is found in the endoplasmic reticulum-Golgi intermediate compartment membrane. The protein localises to the trans-Golgi network membrane. Appears to be involved in vesicular protein trafficking, mainly in the early secretory pathway. In COPI vesicle-mediated retrograde transport involved in the coatomer recruitment to membranes of the early secretory pathway. Increases coatomer-dependent activity of ARFGAP2. Thought to play a crucial role in the specific retention of p24 complexes in cis-Golgi membranes; specifically contributes to the coupled localization of TMED2 and TMED10 in the cis-Golgi network. May be involved in organization of intracellular membranes, such as of the ER-Golgi intermediate compartment and the Golgi apparatus. Involved in ER localization of PTPN2. This Bos taurus (Bovine) protein is Transmembrane emp24 domain-containing protein 9 (TMED9).